The chain runs to 338 residues: Flap endonuclease 1 (338 aa).

The tract at residues 1-98 is N-domain; the sequence is MGVNLSSILI…ETLRERSLIK (98 aa). Residues Asp-27, Asp-80, Glu-152, Glu-154, Asp-173, Asp-175, and Asp-236 each coordinate Mg(2+). The I-domain stretch occupies residues 116 to 257; sequence KIRSLSSRIN…TALSLIKKYN (142 aa). The interval 330–338 is interaction with PCNA; it reads HQSSLDRFF.

This sequence belongs to the XPG/RAD2 endonuclease family. FEN1 subfamily. As to quaternary structure, interacts with PCNA. PCNA stimulates the nuclease activity without altering cleavage specificity. Requires Mg(2+) as cofactor.

Its function is as follows. Structure-specific nuclease with 5'-flap endonuclease and 5'-3' exonuclease activities involved in DNA replication and repair. During DNA replication, cleaves the 5'-overhanging flap structure that is generated by displacement synthesis when DNA polymerase encounters the 5'-end of a downstream Okazaki fragment. Binds the unpaired 3'-DNA end and kinks the DNA to facilitate 5' cleavage specificity. Cleaves one nucleotide into the double-stranded DNA from the junction in flap DNA, leaving a nick for ligation. Also involved in the base excision repair (BER) pathway. Acts as a genome stabilization factor that prevents flaps from equilibrating into structures that lead to duplications and deletions. Also possesses 5'-3' exonuclease activity on nicked or gapped double-stranded DNA. The sequence is that of Flap endonuclease 1 from Picrophilus torridus (strain ATCC 700027 / DSM 9790 / JCM 10055 / NBRC 100828 / KAW 2/3).